The chain runs to 307 residues: MLVYIAGSGAMGCRFGYQISKTNNDVILLDNWEDHINAIKENGLVVTGDVEETVKLPIMKPTEATQEADLIILFTKAMQLPQMLQDIKGIIGKETKVLCLLNGLGHEDVIRQYIPEHNILMGVTVWTAGLEGPGRAHLQGVGALNLQSMDPNNQDAGHQVADLLNKANLNATYDENVVPNIWRKACVNGTMNSTCALLDCTIGELFASEDGLKMVKEIIHEFVIVGQAEGVELNEEEITQYVMDTSVKAAHHYPSMHQDLVQNHRLTEIDFINGAVNTKGEKLGINTPYCRMITELVHAKEAVLNIQ.

NADP(+) contacts are provided by residues 7–12 (GSGAMG), asparagine 102, and alanine 128. Asparagine 102 provides a ligand contact to substrate. The Proton donor role is filled by lysine 184. Asparagine 188, asparagine 192, and serine 255 together coordinate substrate. Residue glutamate 268 coordinates NADP(+).

It belongs to the ketopantoate reductase family.

The protein resides in the cytoplasm. It carries out the reaction (R)-pantoate + NADP(+) = 2-dehydropantoate + NADPH + H(+). It participates in cofactor biosynthesis; (R)-pantothenate biosynthesis; (R)-pantoate from 3-methyl-2-oxobutanoate: step 2/2. Its function is as follows. Catalyzes the NADPH-dependent reduction of ketopantoate into pantoic acid. The protein is 2-dehydropantoate 2-reductase (apbA) of Streptococcus pyogenes serotype M18 (strain MGAS8232).